The chain runs to 192 residues: Adenine phosphoribosyltransferase 2 (192 aa).

It belongs to the purine/pyrimidine phosphoribosyltransferase family. As to quaternary structure, homodimer.

The protein resides in the cytoplasm. It carries out the reaction AMP + diphosphate = 5-phospho-alpha-D-ribose 1-diphosphate + adenine. It participates in purine metabolism; AMP biosynthesis via salvage pathway; AMP from adenine: step 1/1. Its function is as follows. Catalyzes a salvage reaction resulting in the formation of AMP, that is energically less costly than de novo synthesis. May contribute to the recycling of adenine into adenylate nucleotides and the inactivation of cytokinins by phosphoribosylation. Possesses low activity toward adenine and cytokinins. In Arabidopsis thaliana (Mouse-ear cress), this protein is Adenine phosphoribosyltransferase 2 (APT2).